A 394-amino-acid polypeptide reads, in one-letter code: Probable ribosome production factor 1 (394 aa).

Disordered stretches follow at residues 1 to 98 and 116 to 152; these read MIKI…PVLN and MKKE…EKDQ. 2 stretches are compositionally biased toward acidic residues: residues 15–33 and 59–88; these read QDSD…DLEV and ASED…DDDD. The span at 116–134 shows a compositional bias: basic residues; that stretch reads MKKEKHKKKMQERRARRKA. In terms of domain architecture, Brix spans 185 to 369; it reads PKVLITFADN…LRSLQEGTFD (185 aa). The tract at residues 347–364 is RNA-binding; it reads VKLRELGPRFTLKLRSLQ.

The protein localises to the nucleus. It is found in the nucleolus. Functionally, may be required for ribosome biogenesis. In Drosophila melanogaster (Fruit fly), this protein is Probable ribosome production factor 1.